The sequence spans 92 residues: RNA-binding protein Hfq (92 aa).

Residues Asp10–Ile71 form the Sm domain. The interval Tyr73–Gly92 is disordered. The span at Ala75–Gly92 shows a compositional bias: low complexity.

This sequence belongs to the Hfq family. Homohexamer.

RNA chaperone that binds small regulatory RNA (sRNAs) and mRNAs to facilitate mRNA translational regulation in response to envelope stress, environmental stress and changes in metabolite concentrations. Also binds with high specificity to tRNAs. This Caldicellulosiruptor bescii (strain ATCC BAA-1888 / DSM 6725 / KCTC 15123 / Z-1320) (Anaerocellum thermophilum) protein is RNA-binding protein Hfq.